We begin with the raw amino-acid sequence, 330 residues long: Electron transfer flavoprotein subunit alpha (330 aa).

Leucine 270 to asparagine 298 contributes to the FAD binding site.

This sequence belongs to the ETF alpha-subunit/FixB family. In terms of assembly, heterodimer of an alpha and a beta subunit. The cofactor is FAD.

In terms of biological role, the electron transfer flavoprotein serves as a specific electron acceptor for other dehydrogenases. It transfers the electrons to the main respiratory chain via ETF-ubiquinone oxidoreductase (ETF dehydrogenase). This chain is Electron transfer flavoprotein subunit alpha (etfA), found in Thermoanaerobacterium thermosaccharolyticum (strain ATCC 7956 / DSM 571 / NCIMB 9385 / NCA 3814 / NCTC 13789 / WDCM 00135 / 2032) (Clostridium thermosaccharolyticum).